A 296-amino-acid polypeptide reads, in one-letter code: MSMGGDTTWVGKKPIRRIGGLSDALSIASDLGFAVAPPPSQEELQSFASSNGERGDDLIRVLRELSVVQRKIADLQVELQGRKDDKNVAHLTHVGEMQKKIETLSRITQILKDVIQNKDRIIARLQQPYSLDCIPVEAEYQKQFSELLMKAASDYGALTASVSDFQWSQNFKEPPSVWGEMLRPIPVALASCTRFFEAMSAMRESFATLQELRVGNSAVSLPTTPGGNEMTHRDSDCVTPPQGRIESSFDDLAVHKTRRQNNDQNEEEEEEEEEEDGNNNGNRRLSWPPSVKKSSV.

Coiled coils occupy residues D56–K83 and A253–L285. Residues A218–V296 are disordered. Over residues Q264–G277 the composition is skewed to acidic residues.

The protein belongs to the HAUS2 family. In terms of assembly, part of the augmin complex composed of 8 subunits. The complex acts on microtubules and interacts with gamma-tubulin in spindles and the phragmoplast.

Contributes to the assembly of the acentrosomal spindle and phragmoplast microtubule arrays as part of the augmin complex. The polypeptide is AUGMIN subunit 2 (Arabidopsis thaliana (Mouse-ear cress)).